A 219-amino-acid polypeptide reads, in one-letter code: Small ribosomal subunit protein uS19 (219 aa).

The segment at 1-128 (MGFKGAWNKR…YEEIYAQYKQ (128 aa)) is unknown. A small ribosomal subunit protein uS19 region spans residues 129–219 (MTEKKAYVDP…DKTAKVVKKK (91 aa)).

Belongs to the universal ribosomal protein uS19 family.

Its function is as follows. Protein S19 forms a complex with S13 that binds strongly to the 16S ribosomal RNA. The protein is Small ribosomal subunit protein uS19 of Aquifex pyrophilus.